Reading from the N-terminus, the 89-residue chain is MDFLARLLGRESPGSKNVAKERLRLVLIHDRADISPQLLQLLKNEIVEVISKYMEIDDKGLEVSLEHVDKQVALVANIPIRKMKRAANI.

It belongs to the MinE family.

Prevents the cell division inhibition by proteins MinC and MinD at internal division sites while permitting inhibition at polar sites. This ensures cell division at the proper site by restricting the formation of a division septum at the midpoint of the long axis of the cell. This is Cell division topological specificity factor from Desulforudis audaxviator (strain MP104C).